The following is a 273-amino-acid chain: 2,3,4,5-tetrahydropyridine-2,6-dicarboxylate N-succinyltransferase (273 aa).

Substrate is bound by residues R104 and D141.

The protein belongs to the transferase hexapeptide repeat family. Homotrimer.

The protein localises to the cytoplasm. It catalyses the reaction (S)-2,3,4,5-tetrahydrodipicolinate + succinyl-CoA + H2O = (S)-2-succinylamino-6-oxoheptanedioate + CoA. It functions in the pathway amino-acid biosynthesis; L-lysine biosynthesis via DAP pathway; LL-2,6-diaminopimelate from (S)-tetrahydrodipicolinate (succinylase route): step 1/3. This Chromobacterium violaceum (strain ATCC 12472 / DSM 30191 / JCM 1249 / CCUG 213 / NBRC 12614 / NCIMB 9131 / NCTC 9757 / MK) protein is 2,3,4,5-tetrahydropyridine-2,6-dicarboxylate N-succinyltransferase.